The following is a 497-amino-acid chain: Bifunctional protein GlmU (497 aa).

Positions 1-243 are pyrophosphorylase; that stretch reads MTSSTTSSTD…SALVAGVNDR (243 aa). Residues 16–19, K30, Q87, and 92–93 each bind UDP-N-acetyl-alpha-D-glucosamine; these read LAAG and GT. D118 is a binding site for Mg(2+). 4 residues coordinate UDP-N-acetyl-alpha-D-glucosamine: G153, E168, N183, and N241. Position 241 (N241) interacts with Mg(2+). The segment at 244-264 is linker; it reads VQLAALGAELNRRIVTAHQRA. The tract at residues 265–497 is N-acetyltransferase; it reads GVTVIDPGST…LGHHDDSQGS (233 aa). Residues R346 and K364 each contribute to the UDP-N-acetyl-alpha-D-glucosamine site. H376 (proton acceptor) is an active-site residue. Residues Y379 and N390 each coordinate UDP-N-acetyl-alpha-D-glucosamine. Acetyl-CoA contacts are provided by residues A393, 399–400, S418, and A436; that span reads NY. The interval 473-497 is disordered; sequence ARAAERASGEAAEQALGHHDDSQGS. The span at 488 to 497 shows a compositional bias: basic and acidic residues; sequence LGHHDDSQGS.

In the N-terminal section; belongs to the N-acetylglucosamine-1-phosphate uridyltransferase family. The protein in the C-terminal section; belongs to the transferase hexapeptide repeat family. In terms of assembly, homotrimer. It depends on Mg(2+) as a cofactor.

It localises to the cytoplasm. It carries out the reaction alpha-D-glucosamine 1-phosphate + acetyl-CoA = N-acetyl-alpha-D-glucosamine 1-phosphate + CoA + H(+). The catalysed reaction is N-acetyl-alpha-D-glucosamine 1-phosphate + UTP + H(+) = UDP-N-acetyl-alpha-D-glucosamine + diphosphate. The protein operates within nucleotide-sugar biosynthesis; UDP-N-acetyl-alpha-D-glucosamine biosynthesis; N-acetyl-alpha-D-glucosamine 1-phosphate from alpha-D-glucosamine 6-phosphate (route II): step 2/2. It participates in nucleotide-sugar biosynthesis; UDP-N-acetyl-alpha-D-glucosamine biosynthesis; UDP-N-acetyl-alpha-D-glucosamine from N-acetyl-alpha-D-glucosamine 1-phosphate: step 1/1. Its pathway is bacterial outer membrane biogenesis; LPS lipid A biosynthesis. In terms of biological role, catalyzes the last two sequential reactions in the de novo biosynthetic pathway for UDP-N-acetylglucosamine (UDP-GlcNAc). The C-terminal domain catalyzes the transfer of acetyl group from acetyl coenzyme A to glucosamine-1-phosphate (GlcN-1-P) to produce N-acetylglucosamine-1-phosphate (GlcNAc-1-P), which is converted into UDP-GlcNAc by the transfer of uridine 5-monophosphate (from uridine 5-triphosphate), a reaction catalyzed by the N-terminal domain. This chain is Bifunctional protein GlmU, found in Mycobacterium sp. (strain JLS).